A 259-amino-acid polypeptide reads, in one-letter code: Tegument protein UL51 homolog (259 aa).

C9 carries S-palmitoyl cysteine; by host lipidation.

Belongs to the herpesviridae UL51 family. As to quaternary structure, oligomerizes. Interacts with ORF53; this interaction mediates ORF53 incorporation to virions. Phosphorylated. Post-translationally, palmitoylation is necessary for Golgi localization.

It is found in the virion tegument. Its subcellular location is the host cytoplasm. The protein resides in the host Golgi apparatus. In terms of biological role, plays several roles during the time course of infection, including egress of virus particles from the perinuclear space and secondary envelopment of cytoplasmic capsids that bud into specific trans-Golgi network (TGN)-derived membranes. This chain is Tegument protein UL51 homolog, found in Varicella-zoster virus (strain Dumas) (HHV-3).